The following is a 324-amino-acid chain: Phosphatidylinositol N-acetylglucosaminyltransferase GPI2 subunit (324 aa).

Over 1-79 the chain is Cytoplasmic; it reads MDEVCAAPAP…TDFWSLVADS (79 aa). A helical membrane pass occupies residues 80-100; the sequence is LPVSQHLSSVVIFASVFVSIY. At 101–107 the chain is on the lumenal side; the sequence is RNQLSCA. The helical transmembrane segment at 108 to 128 threads the bilayer; it reads LVGFVSNVSAVAAFILWDFVL. The Cytoplasmic portion of the chain corresponds to 129 to 140; sequence RKPCNNRTFPNY. Residues 141–161 form a helical membrane-spanning segment; sequence MGIVKSCILIVLTLAGLSPIL. The Lumenal portion of the chain corresponds to 162–171; sequence MSLTKSTSPD. Residues 172 to 192 traverse the membrane as a helical segment; the sequence is SVWAIAVWLFLANVFFHEYTT. Topologically, residues 193 to 223 are cytoplasmic; sequence ETIRPHVRLHNSLSTNAALSASVVLASRLEK. The chain crosses the membrane as a helical span at residues 224 to 244; sequence SINVFFFILFAVHWFALFPIF. Over 245–250 the chain is Lumenal; sequence RKYIHV. A helical transmembrane segment spans residues 251–271; the sequence is FSFYADMLMTLVLIISAYIAL. The Cytoplasmic portion of the chain corresponds to 272 to 276; the sequence is NAVAS. Residues 277–299 traverse the membrane as a helical segment; that stretch reads VVIAFVFLSLIFFISFICPIWFI. The Lumenal portion of the chain corresponds to 300-324; the sequence is KLQRFKNEIHGPWDIALPKLGPSKG.

Belongs to the PIGC family.

The protein localises to the endoplasmic reticulum membrane. The enzyme catalyses a 1,2-diacyl-sn-glycero-3-phospho-(1D-myo-inositol) + UDP-N-acetyl-alpha-D-glucosamine = a 6-(N-acetyl-alpha-D-glucosaminyl)-1-(1,2-diacyl-sn-glycero-3-phospho)-1D-myo-inositol + UDP + H(+). It participates in glycolipid biosynthesis; glycosylphosphatidylinositol-anchor biosynthesis. Functionally, part of the complex catalyzing the transfer of N-acetylglucosamine from UDP-N-acetylglucosamine to phosphatidylinositol, the first step of GPI biosynthesis. The polypeptide is Phosphatidylinositol N-acetylglucosaminyltransferase GPI2 subunit (gpi2) (Schizosaccharomyces pombe (strain 972 / ATCC 24843) (Fission yeast)).